The following is a 417-amino-acid chain: UDP-N-acetylglucosamine 1-carboxyvinyltransferase (417 aa).

Position 22–23 (22–23) interacts with phosphoenolpyruvate; it reads KN. Residue Arg-93 participates in UDP-N-acetyl-alpha-D-glucosamine binding. Cys-117 (proton donor) is an active-site residue. 2-(S-cysteinyl)pyruvic acid O-phosphothioketal is present on Cys-117. UDP-N-acetyl-alpha-D-glucosamine is bound by residues 122–126, Asp-305, and Ile-327; that span reads RPVDQ.

It belongs to the EPSP synthase family. MurA subfamily.

It localises to the cytoplasm. The enzyme catalyses phosphoenolpyruvate + UDP-N-acetyl-alpha-D-glucosamine = UDP-N-acetyl-3-O-(1-carboxyvinyl)-alpha-D-glucosamine + phosphate. It participates in cell wall biogenesis; peptidoglycan biosynthesis. Its function is as follows. Cell wall formation. Adds enolpyruvyl to UDP-N-acetylglucosamine. This Chromobacterium violaceum (strain ATCC 12472 / DSM 30191 / JCM 1249 / CCUG 213 / NBRC 12614 / NCIMB 9131 / NCTC 9757 / MK) protein is UDP-N-acetylglucosamine 1-carboxyvinyltransferase.